The following is a 94-amino-acid chain: Co-chaperonin GroES (94 aa).

Belongs to the GroES chaperonin family. Heptamer of 7 subunits arranged in a ring. Interacts with the chaperonin GroEL.

Its subcellular location is the cytoplasm. Its function is as follows. Together with the chaperonin GroEL, plays an essential role in assisting protein folding. The GroEL-GroES system forms a nano-cage that allows encapsulation of the non-native substrate proteins and provides a physical environment optimized to promote and accelerate protein folding. GroES binds to the apical surface of the GroEL ring, thereby capping the opening of the GroEL channel. The protein is Co-chaperonin GroES of Pediococcus pentosaceus (strain ATCC 25745 / CCUG 21536 / LMG 10740 / 183-1w).